We begin with the raw amino-acid sequence, 172 residues long: Immune protein Tsi1 (172 aa).

Positions 1-19 are cleaved as a signal peptide; the sequence is MKLLAGSFAALFLSLSAQA. 3 cysteine pairs are disulfide-bonded: cysteine 22–cysteine 167, cysteine 79–cysteine 121, and cysteine 147–cysteine 155.

As to quaternary structure, forms a heterotetramer with Tse1 consisting of two Tse1 dimers and two Tsi1 dimers. Formation of the complex inactivates Tse1 enzymatic activity.

Functionally, immunity protein that plays a role in preventing early activation of toxin Tse1. Binds to a large surface of Tse1 and thereby occludes the active site to specifically inhibits enzyme activity by forming a hydrogen bond with the catalytic diad. The protein is Immune protein Tsi1 of Pseudomonas aeruginosa (strain ATCC 15692 / DSM 22644 / CIP 104116 / JCM 14847 / LMG 12228 / 1C / PRS 101 / PAO1).